Here is a 433-residue protein sequence, read N- to C-terminus: Chaperone SurA (433 aa).

An N-terminal signal peptide occupies residues 1–24 (MKYRIKALLLASSLIITTITSVQA). PpiC domains follow at residues 175–276 (NVEY…KVLD) and 285–384 (VEEV…KLED).

It is found in the periplasm. The catalysed reaction is [protein]-peptidylproline (omega=180) = [protein]-peptidylproline (omega=0). Chaperone involved in the correct folding and assembly of outer membrane proteins. Recognizes specific patterns of aromatic residues and the orientation of their side chains, which are found more frequently in integral outer membrane proteins. May act in both early periplasmic and late outer membrane-associated steps of protein maturation. The protein is Chaperone SurA of Colwellia psychrerythraea (strain 34H / ATCC BAA-681) (Vibrio psychroerythus).